Reading from the N-terminus, the 338-residue chain is Peroxidase 15 (338 aa).

The first 22 residues, M1–C22, serve as a signal peptide directing secretion. 4 disulfide bridges follow: C45/C125, C78/C83, C131/C332, and C210/C242. H76 functions as the Proton acceptor in the catalytic mechanism. D77, V80, G82, D84, and S86 together coordinate Ca(2+). P173 contributes to the substrate binding site. N176 carries an N-linked (GlcNAc...) asparagine glycan. H203 serves as a coordination point for heme b. T204 lines the Ca(2+) pocket. Residues N219 and N250 are each glycosylated (N-linked (GlcNAc...) asparagine). Residues D255, S258, and D263 each coordinate Ca(2+).

This sequence belongs to the peroxidase family. Classical plant (class III) peroxidase subfamily. Requires heme b as cofactor. The cofactor is Ca(2+).

It is found in the secreted. The catalysed reaction is 2 a phenolic donor + H2O2 = 2 a phenolic radical donor + 2 H2O. Its function is as follows. Removal of H(2)O(2), oxidation of toxic reductants, biosynthesis and degradation of lignin, suberization, auxin catabolism, response to environmental stresses such as wounding, pathogen attack and oxidative stress. These functions might be dependent on each isozyme/isoform in each plant tissue. This Arabidopsis thaliana (Mouse-ear cress) protein is Peroxidase 15 (PER15).